Here is a 372-residue protein sequence, read N- to C-terminus: Queuine tRNA-ribosyltransferase (372 aa).

The active-site Proton acceptor is the aspartate 92. Residues 92 to 96, aspartate 146, glutamine 188, and glycine 215 contribute to the substrate site; that span reads DSGGF. The segment at 246–252 is RNA binding; it reads GIGTLRE. Aspartate 265 serves as the catalytic Nucleophile. An RNA binding; important for wobble base 34 recognition region spans residues 270–274; it reads TRLGR. Cysteine 303, cysteine 305, cysteine 308, and histidine 334 together coordinate Zn(2+).

This sequence belongs to the queuine tRNA-ribosyltransferase family. In terms of assembly, homodimer. Within each dimer, one monomer is responsible for RNA recognition and catalysis, while the other monomer binds to the replacement base PreQ1. Requires Zn(2+) as cofactor.

It catalyses the reaction 7-aminomethyl-7-carbaguanine + guanosine(34) in tRNA = 7-aminomethyl-7-carbaguanosine(34) in tRNA + guanine. It participates in tRNA modification; tRNA-queuosine biosynthesis. In terms of biological role, catalyzes the base-exchange of a guanine (G) residue with the queuine precursor 7-aminomethyl-7-deazaguanine (PreQ1) at position 34 (anticodon wobble position) in tRNAs with GU(N) anticodons (tRNA-Asp, -Asn, -His and -Tyr). Catalysis occurs through a double-displacement mechanism. The nucleophile active site attacks the C1' of nucleotide 34 to detach the guanine base from the RNA, forming a covalent enzyme-RNA intermediate. The proton acceptor active site deprotonates the incoming PreQ1, allowing a nucleophilic attack on the C1' of the ribose to form the product. After dissociation, two additional enzymatic reactions on the tRNA convert PreQ1 to queuine (Q), resulting in the hypermodified nucleoside queuosine (7-(((4,5-cis-dihydroxy-2-cyclopenten-1-yl)amino)methyl)-7-deazaguanosine). This chain is Queuine tRNA-ribosyltransferase, found in Prochlorococcus marinus (strain MIT 9303).